The primary structure comprises 560 residues: Dihydroxy-acid dehydratase (560 aa).

Asp78 serves as a coordination point for Mg(2+). Cys119 is a [2Fe-2S] cluster binding site. Residues Asp120 and Lys121 each contribute to the Mg(2+) site. An N6-carboxylysine modification is found at Lys121. Cys192 serves as a coordination point for [2Fe-2S] cluster. Glu446 serves as a coordination point for Mg(2+). Ser472 functions as the Proton acceptor in the catalytic mechanism.

It belongs to the IlvD/Edd family. In terms of assembly, homodimer. [2Fe-2S] cluster serves as cofactor. Requires Mg(2+) as cofactor.

It catalyses the reaction (2R)-2,3-dihydroxy-3-methylbutanoate = 3-methyl-2-oxobutanoate + H2O. It carries out the reaction (2R,3R)-2,3-dihydroxy-3-methylpentanoate = (S)-3-methyl-2-oxopentanoate + H2O. It participates in amino-acid biosynthesis; L-isoleucine biosynthesis; L-isoleucine from 2-oxobutanoate: step 3/4. The protein operates within amino-acid biosynthesis; L-valine biosynthesis; L-valine from pyruvate: step 3/4. In terms of biological role, functions in the biosynthesis of branched-chain amino acids. Catalyzes the dehydration of (2R,3R)-2,3-dihydroxy-3-methylpentanoate (2,3-dihydroxy-3-methylvalerate) into 2-oxo-3-methylpentanoate (2-oxo-3-methylvalerate) and of (2R)-2,3-dihydroxy-3-methylbutanoate (2,3-dihydroxyisovalerate) into 2-oxo-3-methylbutanoate (2-oxoisovalerate), the penultimate precursor to L-isoleucine and L-valine, respectively. The polypeptide is Dihydroxy-acid dehydratase (Anaeromyxobacter dehalogenans (strain 2CP-C)).